We begin with the raw amino-acid sequence, 385 residues long: Acyl-CoA dehydrogenase IpdE1 (385 aa).

FAD is bound by residues 126–129 (QGYS) and Ser-161. The active-site Proton acceptor is Glu-244. 364-366 (SNE) is an FAD binding site.

Belongs to the acyl-CoA dehydrogenase family. In terms of assembly, heterotetramer composed of 2 IpdE1 subunits and 2 IpdE2 subunits. It depends on FAD as a cofactor.

It carries out the reaction 3-[(3aS,4S,5R,7aS)-5-hydroxy-7a-methyl-1-oxo-octahydro-1H-inden-4-yl]propanoyl-CoA + A = (2E)-3-[(3aS,4S,5R,7aS)-5-hydroxy-7a-methyl-1-oxo-octahydro-1H-inden-4-yl]prop-2-enoyl-CoA + AH2. It functions in the pathway steroid metabolism; cholesterol degradation. Its function is as follows. Involved in cholesterol degradation. Catalyzes the dehydrogenation of 5OH-HIP-CoA to 5OH-HIPE-CoA. Can also use octanoyl-CoA and dihydroferuloyl-CoA, with lower efficiency. Cannot use 3-oxo-4-pregnene-20-carboxyl-CoA (3-OPC-CoA). In Mycobacterium tuberculosis (strain ATCC 25618 / H37Rv), this protein is Acyl-CoA dehydrogenase IpdE1.